Consider the following 436-residue polypeptide: MRMTWNFHQYYTNRNDGLMGKLVLTDEEKNNLKALRKIIRLRTRDVFEEAKGIAKAVKKSALTFEIIQEKVSTTQIKHLSDSEQREVAKLIYEMDDDARDEFLGLTPRFWTQGSFQYDTLNRPFQPGQEMDIDDGTYMPMPIFESEPKIGHSLLILLVDASLKSLVAENHGWKFEAKQTCGRIKIEAEKTHIDVPMYAIPKDEFQKKQIALEANRSFVKGAIFESYVADSITDDSETYELDSENVNLALREGDRKWINSDPKIVEDWFNDSCIRIGKHLRKVCRFMKAWRDAQWDVGGPSSISLMAATVNILDSVAHDASDLGETMKIIAKHLPSEFARGVESPDSTDEKPLFPPSYKHGPREMDIMSKLERLPEILSSAESADSKSEALKKINMAFGNRVTNSELIVLAKALPAFAQEPSSASKPEKISSTMVSG.

112–117 (QGSFQY) provides a ligand contact to GTP. Mg(2+)-binding residues include aspartate 131 and aspartate 133. Arginine 182 provides a ligand contact to ATP. Aspartate 193 is a binding site for Mg(2+). Serine 259 contacts ATP. GTP contacts are provided by lysine 287, serine 301, and aspartate 348. Disordered regions lie at residues 339–358 (RGVE…PSYK) and 417–436 (AQEP…MVSG). The span at 419 to 436 (EPSSASKPEKISSTMVSG) shows a compositional bias: polar residues. Glycine 436 is covalently cross-linked (Glycyl lysine isopeptide (Gly-Lys) (interchain with K-? in acceptor proteins)).

It belongs to the CD-NTase family. A01 subfamily. As to quaternary structure, monomer. Interacts with Cap2 in the presence and absence of phage T2. A Cap2 dimer is bound on either side by a DncV monomer. Mg(2+) serves as cofactor. In bacteria expressing capV-cdnD-cap2, this protein is conjugated to a number of other proteins (by Cap2 via this protein's C-terminal Gly residue), many of which are involved in metabolism. More conjugated protein is found in the absence of Cap3.

It carries out the reaction GTP + ATP = 3',3'-cGAMP + 2 diphosphate. Its activity is regulated as follows. Primed for activation by Cap2 which conjugates it to cellular proteins; priming is target protein-specific (green fluorescent protein does not activate the enzyme), but which protein(s) activate is unclear. Enzymatic activity of DncV is inhibited by folate-like molecules, such as 5-methyltetrahydrofolate di-glutamate and 5-methyltetrahydrofolate, suggesting the existence of a signaling pathway that links folate-like metabolism cofactors to the regulation of cyclic dinucleotide second messenger synthesis. Lacks a regulatory loop and is constitutively activated. Its function is as follows. Cyclic nucleotide synthase (second messenger synthase) of a CBASS antivirus system. CBASS (cyclic oligonucleotide-based antiphage signaling system) provides immunity against bacteriophages. The CD-NTase protein (DncV, this protein) synthesizes cyclic nucleotides in response to infection; these serve as specific second messenger signals. The signals activate a diverse range of effectors, leading to bacterial cell death and thus abortive phage infection. A type II-A(GA) CBASS system. Functionally, catalyzes the synthesis of 3',3'-cyclic GMP-AMP (cGAMP), a second messenger in cell signal transduction, from GTP and ATP in response to phage infection. Also able to produce c-di-AMP and c-di-GMP from ATP and GTP, respectively; however, cGAMP is the dominant molecule produced by DncV in vivo, contrary to the 2'3'-cGAMP produced by eukaryotes. Is required for efficient V.cholerae intestinal colonization, and down-regulates the colonization-influencing process of chemotaxis. Is not active with dATP, TTP, UTP or CTP. Its product controls the activity of cGAMP-activated phospholipase CapV, a patatin-like lipase that is a direct cGAMP receptor encoded in the dncV operon. In terms of biological role, protects E.coli against phage infection. When the CBASS operon (capV-dncV-cap2-cap3) is introduced in E.coli MG1655 there is about 100-fold protection against phages P1 and T2. When the operon is introduced in E.coli MG1655 there is a more than 10(3) decrease in the efficiency of T2 plaque formation. Protects 100-fold against phage T5, offers no protection against T7. When the operon is introduced in E.coli MG1655 it protects against phages T2, T4, T5 and T6. Another paper shows the operon confers protection against phages P1, T2, T5 and T6 but not T4 or lambda. The protein is Cyclic GMP-AMP synthase of Vibrio cholerae serotype O1 (strain ATCC 39315 / El Tor Inaba N16961).